The primary structure comprises 121 residues: Holo-[acyl-carrier-protein] synthase (121 aa).

D8 and E58 together coordinate Mg(2+).

This sequence belongs to the P-Pant transferase superfamily. AcpS family. Requires Mg(2+) as cofactor.

Its subcellular location is the cytoplasm. It carries out the reaction apo-[ACP] + CoA = holo-[ACP] + adenosine 3',5'-bisphosphate + H(+). Functionally, transfers the 4'-phosphopantetheine moiety from coenzyme A to a Ser of acyl-carrier-protein. This is Holo-[acyl-carrier-protein] synthase from Bacillus velezensis (strain DSM 23117 / BGSC 10A6 / LMG 26770 / FZB42) (Bacillus amyloliquefaciens subsp. plantarum).